The sequence spans 352 residues: Ribosomal RNA large subunit methyltransferase M (352 aa).

Residues Ser187, 218–221 (APGG), Asp237, Asp257, and Asp273 each bind S-adenosyl-L-methionine. The Proton acceptor role is filled by Lys302.

It belongs to the class I-like SAM-binding methyltransferase superfamily. RNA methyltransferase RlmE family. RlmM subfamily. As to quaternary structure, monomer.

The protein resides in the cytoplasm. It carries out the reaction cytidine(2498) in 23S rRNA + S-adenosyl-L-methionine = 2'-O-methylcytidine(2498) in 23S rRNA + S-adenosyl-L-homocysteine + H(+). Catalyzes the 2'-O-methylation at nucleotide C2498 in 23S rRNA. This is Ribosomal RNA large subunit methyltransferase M from Methylococcus capsulatus (strain ATCC 33009 / NCIMB 11132 / Bath).